Reading from the N-terminus, the 158-residue chain is Lipoprotein signal peptidase (158 aa).

The next 4 helical transmembrane spans lie at 7–27, 38–58, 67–87, and 95–115; these read LFWI…YWVV, ILPG…FSLF, WLSL…PVLE, and GLIL…GYVV. Residues Asp116 and Asp132 contribute to the active site. Residues 125 to 145 traverse the membrane as a helical segment; the sequence is FAVFNMADSFISIGIVCLLLA.

The protein belongs to the peptidase A8 family.

Its subcellular location is the cell inner membrane. It catalyses the reaction Release of signal peptides from bacterial membrane prolipoproteins. Hydrolyzes -Xaa-Yaa-Zaa-|-(S,diacylglyceryl)Cys-, in which Xaa is hydrophobic (preferably Leu), and Yaa (Ala or Ser) and Zaa (Gly or Ala) have small, neutral side chains.. It functions in the pathway protein modification; lipoprotein biosynthesis (signal peptide cleavage). Its function is as follows. This protein specifically catalyzes the removal of signal peptides from prolipoproteins. The chain is Lipoprotein signal peptidase from Trichormus variabilis (strain ATCC 29413 / PCC 7937) (Anabaena variabilis).